Reading from the N-terminus, the 415-residue chain is Gamma-glutamyl phosphate reductase (415 aa).

It belongs to the gamma-glutamyl phosphate reductase family.

It localises to the cytoplasm. It catalyses the reaction L-glutamate 5-semialdehyde + phosphate + NADP(+) = L-glutamyl 5-phosphate + NADPH + H(+). Its pathway is amino-acid biosynthesis; L-proline biosynthesis; L-glutamate 5-semialdehyde from L-glutamate: step 2/2. In terms of biological role, catalyzes the NADPH-dependent reduction of L-glutamate 5-phosphate into L-glutamate 5-semialdehyde and phosphate. The product spontaneously undergoes cyclization to form 1-pyrroline-5-carboxylate. The sequence is that of Gamma-glutamyl phosphate reductase from Bacillus mycoides (strain KBAB4) (Bacillus weihenstephanensis).